Here is a 67-residue protein sequence, read N- to C-terminus: Conotoxin Cl14.2b (67 aa).

The N-terminal stretch at 1 to 20 is a signal peptide; the sequence is MNVTVMFLVLLLLTMPLTDG. The propeptide occupies 21–48; sequence FNIRATNGGELFGPVQRDAGNVLDHGFQ.

It belongs to the conotoxin L superfamily. Contains 2 disulfide bonds. Expressed by the venom duct.

The protein localises to the secreted. Functionally, increases calcium current amplitude through Cav1.2/Cav1.3 channels in rat pancreatic beta-cells, which is a prerequisite for eliciting insulin secretion. Stimulates insulin secretion in NIT-1 insulinoma cell lines. In vivo, significantly decreases mice blood glucose levels as of 45 minutes after treatment, similarly to insulin treatment. Has a potential therapeutic use in endocrinal pathologies such as early stages of type 2 diabetes where the pancreas's capability to produce insulin is still effective. The protein is Conotoxin Cl14.2b of Californiconus californicus (California cone).